The chain runs to 370 residues: tRNA-specific 2-thiouridylase MnmA (370 aa).

ATP-binding positions include 11–18 and methionine 37; that span reads GMSGGVDS. Residues 97 to 99 are interaction with target base in tRNA; sequence NPD. The active-site Nucleophile is cysteine 102. Residues cysteine 102 and cysteine 199 are joined by a disulfide bond. Glycine 126 serves as a coordination point for ATP. The interaction with tRNA stretch occupies residues 149–151; that stretch reads KDQ. Cysteine 199 (cysteine persulfide intermediate) is an active-site residue. Positions 307–308 are interaction with tRNA; that stretch reads RY.

It belongs to the MnmA/TRMU family.

The protein localises to the cytoplasm. It carries out the reaction S-sulfanyl-L-cysteinyl-[protein] + uridine(34) in tRNA + AH2 + ATP = 2-thiouridine(34) in tRNA + L-cysteinyl-[protein] + A + AMP + diphosphate + H(+). Its function is as follows. Catalyzes the 2-thiolation of uridine at the wobble position (U34) of tRNA, leading to the formation of s(2)U34. The sequence is that of tRNA-specific 2-thiouridylase MnmA from Staphylococcus saprophyticus subsp. saprophyticus (strain ATCC 15305 / DSM 20229 / NCIMB 8711 / NCTC 7292 / S-41).